The following is a 363-amino-acid chain: MESYLTKWCVVLVLLCFGFSVVKAQAQAQVPCFFVFGDSLVDNGNNNGLISIARSNYFPYGIDFGGPTGRFSNGKTTVDVIAELLGFNGYIPAYNTVSGRQILSGVNYASAAAGIREETGRQLGQRISFSGQVRNYQTTVSQVVQLLGDETRAADYLKRCIYSVGLGSNDYLNNYFMPTFYSSSRQFTPEQYANDLISRYSTQLNALYNYGARKFALSGIGAVGCSPNALAGSPDGRTCVDRINSANQIFNNKLRSLVDQLNNNHPDAKFIYINAYGIFQDMITNPARFGFRVTNAGCCGIGRNAGQITCLPGQRPCRDRNAYVFWDAFHPTEAANVIIARRSYNAQSASDAYPMDISRLAQL.

A signal peptide spans 1–24; sequence MESYLTKWCVVLVLLCFGFSVVKA. Ser39 acts as the Nucleophile in catalysis. Catalysis depends on residues Asp327 and His330.

This sequence belongs to the 'GDSL' lipolytic enzyme family.

The protein resides in the secreted. The chain is GDSL esterase/lipase At1g29670 from Arabidopsis thaliana (Mouse-ear cress).